Reading from the N-terminus, the 322-residue chain is Protein IRREGULAR XYLEM 15 (322 aa).

Residues 28–48 (LWLLAFVSFFTIVFLLTLLYT) traverse the membrane as a helical segment.

As to expression, expressed in rosette leaves, stems and siliques. Expressed in the xylem.

Its subcellular location is the golgi apparatus membrane. In terms of biological role, required for xylan biosynthesis, but not directly involved in catalyzing the addition of sugars to the growing polymer. This chain is Protein IRREGULAR XYLEM 15 (IRX15), found in Arabidopsis thaliana (Mouse-ear cress).